Here is a 295-residue protein sequence, read N- to C-terminus: Iron-sulfur cluster carrier protein (295 aa).

38-45 (GKGGVGKS) contributes to the ATP binding site.

The protein belongs to the Mrp/NBP35 ATP-binding proteins family. Homodimer.

Binds and transfers iron-sulfur (Fe-S) clusters to target apoproteins. Can hydrolyze ATP. This chain is Iron-sulfur cluster carrier protein, found in Pyrococcus horikoshii (strain ATCC 700860 / DSM 12428 / JCM 9974 / NBRC 100139 / OT-3).